A 402-amino-acid polypeptide reads, in one-letter code: CCA-adding enzyme (402 aa).

ATP-binding residues include Gly-32 and Arg-35. Residues Gly-32 and Arg-35 each coordinate CTP. Mg(2+) is bound by residues Asp-45 and Asp-47. 5 residues coordinate ATP: Arg-116, Asp-159, Arg-162, Arg-165, and Arg-168. CTP contacts are provided by Arg-116, Asp-159, Arg-162, Arg-165, and Arg-168.

Belongs to the tRNA nucleotidyltransferase/poly(A) polymerase family. Bacterial CCA-adding enzyme type 3 subfamily. Homodimer. Mg(2+) serves as cofactor.

It carries out the reaction a tRNA precursor + 2 CTP + ATP = a tRNA with a 3' CCA end + 3 diphosphate. The enzyme catalyses a tRNA with a 3' CCA end + 2 CTP + ATP = a tRNA with a 3' CCACCA end + 3 diphosphate. Its function is as follows. Catalyzes the addition and repair of the essential 3'-terminal CCA sequence in tRNAs without using a nucleic acid template. Adds these three nucleotides in the order of C, C, and A to the tRNA nucleotide-73, using CTP and ATP as substrates and producing inorganic pyrophosphate. tRNA 3'-terminal CCA addition is required both for tRNA processing and repair. Also involved in tRNA surveillance by mediating tandem CCA addition to generate a CCACCA at the 3' terminus of unstable tRNAs. While stable tRNAs receive only 3'-terminal CCA, unstable tRNAs are marked with CCACCA and rapidly degraded. This is CCA-adding enzyme from Streptococcus thermophilus (strain CNRZ 1066).